The chain runs to 405 residues: L-rhamnonate dehydratase (405 aa).

Residues H33 and R59 each coordinate substrate. Mg(2+) contacts are provided by D226, E252, and E280. Catalysis depends on H329, which acts as the Proton acceptor. E349 is a binding site for substrate.

The protein belongs to the mandelate racemase/muconate lactonizing enzyme family. RhamD subfamily. As to quaternary structure, homooctamer; tetramer of dimers. The cofactor is Mg(2+).

The catalysed reaction is L-rhamnonate = 2-dehydro-3-deoxy-L-rhamnonate + H2O. Functionally, catalyzes the dehydration of L-rhamnonate to 2-keto-3-deoxy-L-rhamnonate (KDR). This chain is L-rhamnonate dehydratase, found in Escherichia coli O6:K15:H31 (strain 536 / UPEC).